The sequence spans 1567 residues: Ice nucleation protein (1567 aa).

The span at 130–185 (PAAEPSAPATQATSATLPTPATPSTQATPSTQSTQSTQSTEATQSTEATPVATVAA) shows a compositional bias: low complexity. Disordered regions lie at residues 130 to 195 (PAAE…QQHD), 270 to 329 (YGST…KGSD), 356 to 378 (AGSE…GSDV), 449 to 474 (TQTS…GSDI), 502 to 529 (SESS…YGST), 594 to 620 (QTAG…DVTA), 642 to 668 (QTSG…DVTA), 689 to 716 (TQTS…DVTA), 738 to 764 (QTSG…DVTA), 785 to 810 (TQTS…GSDI), 833 to 860 (TQTS…DVTA), 929 to 959 (TQTS…AGYG), and 977 to 1004 (TQTS…DVTA). Over residues 270–282 (YGSTQTAQEGSRL) the composition is skewed to polar residues. The segment covering 283–296 (TSGYGSTATSGSDS) has biased composition (low complexity). Polar residues-rich tracts occupy residues 302 to 325 (YGST…QTAR), 356 to 373 (AGSE…QTAR), 449 to 469 (TQTS…QTAR), and 502 to 519 (SESS…AQQD). A compositionally biased stretch (low complexity) spans 520–529 (SSLTTGYGST). 8 stretches are compositionally biased toward polar residues: residues 594 to 613 (QTAG…QTAR), 642 to 661 (QTSG…QTAR), 689 to 709 (TQTS…QTAR), 738 to 757 (QTSG…QTAR), 785 to 805 (TQTS…QTAR), 833 to 853 (TQTS…QTAR), 929 to 949 (TQTS…QTAR), and 977 to 997 (TQTS…QTAR).

It belongs to the bacterial ice nucleation protein family.

It localises to the cell outer membrane. Functionally, ice nucleation proteins enable bacteria to nucleate crystallization in supercooled water. In Xanthomonas campestris pv. translucens, this protein is Ice nucleation protein (inaX).